A 65-amino-acid chain; its full sequence is Defensin-B2 (65 aa).

The first 23 residues, 1–23 (MEARVLLLCAVLFLLVHTPPAAG), serve as a signal peptide directing secretion. 3 disulfides stabilise this stretch: Cys-29/Cys-56, Cys-36/Cys-50, and Cys-40/Cys-57.

The protein belongs to the beta-defensin family. In terms of tissue distribution, lowly expressed in spleen, and lung.

The protein resides in the secreted. Functionally, has antimicrobial activity. The chain is Defensin-B2 from Ornithorhynchus anatinus (Duckbill platypus).